The chain runs to 227 residues: Ribose-5-phosphate isomerase A (227 aa).

Residues 28 to 31, 81 to 84, and 94 to 97 each bind substrate; these read TGST, DGAD, and KGGG. Glutamate 103 serves as the catalytic Proton acceptor. Lysine 121 is a binding site for substrate.

This sequence belongs to the ribose 5-phosphate isomerase family. In terms of assembly, homodimer.

The catalysed reaction is aldehydo-D-ribose 5-phosphate = D-ribulose 5-phosphate. The protein operates within carbohydrate degradation; pentose phosphate pathway; D-ribose 5-phosphate from D-ribulose 5-phosphate (non-oxidative stage): step 1/1. Functionally, catalyzes the reversible conversion of ribose-5-phosphate to ribulose 5-phosphate. In Caulobacter vibrioides (strain ATCC 19089 / CIP 103742 / CB 15) (Caulobacter crescentus), this protein is Ribose-5-phosphate isomerase A.